A 339-amino-acid chain; its full sequence is Putative pectinesterase 10 (339 aa).

The signal sequence occupies residues 1–28 (MKGVTIHNFCYSYFKVCLLVMSLAYGSA). Asn112 is a glycosylation site (N-linked (GlcNAc...) asparagine). Thr116 provides a ligand contact to substrate. Catalysis depends on Asp169, which acts as the Proton donor. Asp190 functions as the Nucleophile in the catalytic mechanism. Residues Arg252 and Trp254 each contribute to the substrate site. Asn322 carries N-linked (GlcNAc...) asparagine glycosylation.

Belongs to the pectinesterase family. Expressed in siliques.

It localises to the secreted. It is found in the cell wall. The enzyme catalyses [(1-&gt;4)-alpha-D-galacturonosyl methyl ester](n) + n H2O = [(1-&gt;4)-alpha-D-galacturonosyl](n) + n methanol + n H(+). It participates in glycan metabolism; pectin degradation; 2-dehydro-3-deoxy-D-gluconate from pectin: step 1/5. In terms of biological role, acts in the modification of cell walls via demethylesterification of cell wall pectin. The sequence is that of Putative pectinesterase 10 (PME10) from Arabidopsis thaliana (Mouse-ear cress).